A 355-amino-acid polypeptide reads, in one-letter code: N-acylethanolamine-hydrolyzing acid amidase (355 aa).

Residues 1–17 form the signal peptide; sequence MLLLQIILLLLPVICSA. The active-site Nucleophile is the cysteine 122. Residues asparagine 150, asparagine 160, and asparagine 328 are each glycosylated (N-linked (GlcNAc...) asparagine).

The protein belongs to the acid ceramidase family. As to quaternary structure, heterodimer of an alpha and a beta subunit, produced by autocatalytic cleavage. N-glycosylated. In terms of processing, autoproteolytic cleavage at pH 4.5 gives rise to the alpha and beta subunit. Cleavage gives rise to a conformation change that activates the enzyme. The same catalytic Cys residue mediates the autoproteolytic cleavage and subsequent hydrolysis of lipid substrates.

The protein resides in the lysosome. Its subcellular location is the membrane. It catalyses the reaction N-hexadecanoylethanolamine + H2O = ethanolamine + hexadecanoate. The enzyme catalyses an N-(long-chain fatty acyl)ethanolamine + H2O = a long-chain fatty acid + ethanolamine. It functions in the pathway lipid metabolism; fatty acid metabolism. In terms of biological role, degrades bioactive fatty acid amides, such as N-palmitoylethanolamine, to ethanolamine and free fatty acids. The sequence is that of N-acylethanolamine-hydrolyzing acid amidase from Caenorhabditis elegans.